Here is a 474-residue protein sequence, read N- to C-terminus: Dihydrolipoyl dehydrogenase (474 aa).

FAD is bound by residues Glu39 to Cys47, Lys56, and Ala118. The cysteines at positions 47 and 52 are disulfide-linked. Residues Gly186 to Ile190, Glu209, and Ala275 to Arg278 contribute to the NAD(+) site. FAD is bound by residues Asp318 and Ala326. Catalysis depends on His450, which acts as the Proton acceptor.

It belongs to the class-I pyridine nucleotide-disulfide oxidoreductase family. In terms of assembly, homodimer. It depends on FAD as a cofactor.

The protein resides in the cytoplasm. It catalyses the reaction N(6)-[(R)-dihydrolipoyl]-L-lysyl-[protein] + NAD(+) = N(6)-[(R)-lipoyl]-L-lysyl-[protein] + NADH + H(+). The polypeptide is Dihydrolipoyl dehydrogenase (lpdA) (Halobacterium salinarum (strain ATCC 700922 / JCM 11081 / NRC-1) (Halobacterium halobium)).